The chain runs to 208 residues: MKGLFVTIEGPEGSGKTTLIQSLLPYFEQKEQKVMATREPGGIAISEDIRTILHKQEYTMMEARTEALLYAAARRQHLVEKVMPALNDDYLVLCDRFIDSSLAYQGYARGLGMDKVFEINRFATEDCMPSLTIYLDIEPEVGLARIAKDAGREVNRLDMEDISFHKRVREGYLQVVERFSDRIVLVNADQPMEKLIEEVIQVIEDKLL.

10-17 (GPEGSGKT) provides a ligand contact to ATP.

Belongs to the thymidylate kinase family.

It carries out the reaction dTMP + ATP = dTDP + ADP. Phosphorylation of dTMP to form dTDP in both de novo and salvage pathways of dTTP synthesis. The polypeptide is Thymidylate kinase (Bacillus cereus (strain 03BB102)).